Reading from the N-terminus, the 219-residue chain is Ribose-5-phosphate isomerase A (219 aa).

Residues 28 to 31 (SGST), 81 to 84 (DGAD), and 94 to 97 (KGGG) each bind substrate. Glu103 (proton acceptor) is an active-site residue. Lys121 is a binding site for substrate.

The protein belongs to the ribose 5-phosphate isomerase family. As to quaternary structure, homodimer.

The enzyme catalyses aldehydo-D-ribose 5-phosphate = D-ribulose 5-phosphate. The protein operates within carbohydrate degradation; pentose phosphate pathway; D-ribose 5-phosphate from D-ribulose 5-phosphate (non-oxidative stage): step 1/1. In terms of biological role, catalyzes the reversible conversion of ribose-5-phosphate to ribulose 5-phosphate. The sequence is that of Ribose-5-phosphate isomerase A from Glaesserella parasuis serovar 5 (strain SH0165) (Haemophilus parasuis).